We begin with the raw amino-acid sequence, 215 residues long: Thiamine-phosphate synthase (215 aa).

Residues 37–41 and N69 contribute to the 4-amino-2-methyl-5-(diphosphooxymethyl)pyrimidine site; that span reads QLRIK. Mg(2+) is bound by residues D70 and D89. Residue S108 participates in 4-amino-2-methyl-5-(diphosphooxymethyl)pyrimidine binding. 134–136 is a 2-[(2R,5Z)-2-carboxy-4-methylthiazol-5(2H)-ylidene]ethyl phosphate binding site; it reads TQT. A 4-amino-2-methyl-5-(diphosphooxymethyl)pyrimidine-binding site is contributed by K137. Residues G166 and 186–187 contribute to the 2-[(2R,5Z)-2-carboxy-4-methylthiazol-5(2H)-ylidene]ethyl phosphate site; that span reads VS.

It belongs to the thiamine-phosphate synthase family. Mg(2+) serves as cofactor.

It carries out the reaction 2-[(2R,5Z)-2-carboxy-4-methylthiazol-5(2H)-ylidene]ethyl phosphate + 4-amino-2-methyl-5-(diphosphooxymethyl)pyrimidine + 2 H(+) = thiamine phosphate + CO2 + diphosphate. The enzyme catalyses 2-(2-carboxy-4-methylthiazol-5-yl)ethyl phosphate + 4-amino-2-methyl-5-(diphosphooxymethyl)pyrimidine + 2 H(+) = thiamine phosphate + CO2 + diphosphate. The catalysed reaction is 4-methyl-5-(2-phosphooxyethyl)-thiazole + 4-amino-2-methyl-5-(diphosphooxymethyl)pyrimidine + H(+) = thiamine phosphate + diphosphate. It functions in the pathway cofactor biosynthesis; thiamine diphosphate biosynthesis; thiamine phosphate from 4-amino-2-methyl-5-diphosphomethylpyrimidine and 4-methyl-5-(2-phosphoethyl)-thiazole: step 1/1. Condenses 4-methyl-5-(beta-hydroxyethyl)thiazole monophosphate (THZ-P) and 2-methyl-4-amino-5-hydroxymethyl pyrimidine pyrophosphate (HMP-PP) to form thiamine monophosphate (TMP). The polypeptide is Thiamine-phosphate synthase (Yersinia pestis (strain Pestoides F)).